Reading from the N-terminus, the 365-residue chain is Peptide chain release factor 1 (365 aa).

Glutamine 242 carries the post-translational modification N5-methylglutamine.

Belongs to the prokaryotic/mitochondrial release factor family. In terms of processing, methylated by PrmC. Methylation increases the termination efficiency of RF1.

It localises to the cytoplasm. Peptide chain release factor 1 directs the termination of translation in response to the peptide chain termination codons UAG and UAA. In Fusobacterium nucleatum subsp. nucleatum (strain ATCC 25586 / DSM 15643 / BCRC 10681 / CIP 101130 / JCM 8532 / KCTC 2640 / LMG 13131 / VPI 4355), this protein is Peptide chain release factor 1.